The primary structure comprises 514 residues: ATP synthase subunit alpha (514 aa).

Position 170–177 (170–177 (GDRQIGKT)) interacts with ATP.

Belongs to the ATPase alpha/beta chains family. As to quaternary structure, F-type ATPases have 2 components, CF(1) - the catalytic core - and CF(0) - the membrane proton channel. CF(1) has five subunits: alpha(3), beta(3), gamma(1), delta(1), epsilon(1). CF(0) has three main subunits: a(1), b(2) and c(9-12). The alpha and beta chains form an alternating ring which encloses part of the gamma chain. CF(1) is attached to CF(0) by a central stalk formed by the gamma and epsilon chains, while a peripheral stalk is formed by the delta and b chains.

It is found in the cell inner membrane. The enzyme catalyses ATP + H2O + 4 H(+)(in) = ADP + phosphate + 5 H(+)(out). Its function is as follows. Produces ATP from ADP in the presence of a proton gradient across the membrane. The alpha chain is a regulatory subunit. The polypeptide is ATP synthase subunit alpha (Ectopseudomonas mendocina (strain ymp) (Pseudomonas mendocina)).